The chain runs to 146 residues: Ribonuclease H (146 aa).

Residues 1–143 (MRKKIIIYTD…CDYLARQAIK (143 aa)) form the RNase H type-1 domain. The Mg(2+) site is built by D10, E48, D70, and D135.

The protein belongs to the RNase H family. Monomer. Mg(2+) is required as a cofactor.

It is found in the cytoplasm. The enzyme catalyses Endonucleolytic cleavage to 5'-phosphomonoester.. In terms of biological role, endonuclease that specifically degrades the RNA of RNA-DNA hybrids. The polypeptide is Ribonuclease H (Prosthecochloris aestuarii (strain DSM 271 / SK 413)).